Reading from the N-terminus, the 414-residue chain is Putative gustatory receptor 47b (414 aa).

Topologically, residues 1–5 (MQRDD) are cytoplasmic. A helical transmembrane segment spans residues 6 to 26 (GFVYCYGNLYSLLLYWGLVTI). Residues 27–40 (RVRSPDRGGAFSNR) lie on the Extracellular side of the membrane. Residues 41 to 61 (WTVCYALFTRSFMVICFMATV) traverse the membrane as a helical segment. Topologically, residues 62-142 (MTKLRDPEMS…QWNYRRARLK (81 aa)) are cytoplasmic. A helical transmembrane segment spans residues 143 to 163 (YWYGTVIVGFCFFSFSISLIF). The Extracellular segment spans residues 164-182 (DTTRCTCGIPSTLLMAFTY). A helical transmembrane segment spans residues 183-203 (TLLTSSVGLLGFVHIGIMDFI). Topologically, residues 204 to 249 (RVRLRLVQQLLHQLYQADDSSEVHERIAYLFEMSKRCSFLLAELNG) are cytoplasmic. The helical transmembrane segment at 250 to 270 (VFGFAAAAGIFYDFTIMTCFV) threads the bilayer. The Extracellular segment spans residues 271-291 (YVICQKLLEREPWDPEYVYML). The chain crosses the membrane as a helical span at residues 292–312 (LHVAIHTYKVVITSTYGYLLL). Residues 313–364 (REKRNCMHLLSQYSRYFSGQDVARRKTEDFQHWRMHNRQAAMVGSTTLLSVS) are Cytoplasmic-facing. Residues 365–385 (TIYLVYNGMANYVIILVQLLF) traverse the membrane as a helical segment. The Extracellular segment spans residues 386–414 (QQQQIKDHQLTSGKDVDIVGPMGPITHMD).

Belongs to the insect chemoreceptor superfamily. Gustatory receptor (GR) family. Gr57a subfamily. In terms of tissue distribution, expressed in neurons of the terminal external chemosensory organ of larvae.

Its subcellular location is the cell membrane. Probable gustatory receptor which mediates acceptance or avoidance behavior, depending on its substrates. This Drosophila melanogaster (Fruit fly) protein is Putative gustatory receptor 47b (Gr47b).